The sequence spans 269 residues: MLKEQLIAEAQKIDASVALDSIFESVNISPEAKETFGTVFEATVKQHAVKLAESHIAKIAEKAEEEVEKNKEEAEEKAEKKIAEQASKFIDHLAKEWLAENKLAVDKGIKAELFESMLGGLKELFVEHNVVVPEESVDVVAEMEEELQEHKEESPRLFEELNMRDAYINYVQREVALSESTKDLTESQKEKVSALVEGMDYSDAFSSKLSAIVEMVKKSNKDESTITESINTPDTEAAGLNFVTEAVEDKAAQGAEDIVSVYAKVASRF.

This sequence belongs to the T4likevirus capsid assembly scaffolding protein family.

It is found in the virion. Scaffolding protein involved in the icosahedric procapsid assembly. Coassembles with the capsid proteins to form the procapsid, in which the scaffolding protein is found within the external shell of icosahedrally arranged capsid protein subunits. In a subsequent step the scaffolding protein molecules are cleaved by the viral protease and released, except for the internal peptide VII. Its function is as follows. Cleavage product of Gp22 that is incorporated into the mature phage head. In Enterobacteria phage T4 (Bacteriophage T4), this protein is Capsid assembly scaffolding protein (22).